We begin with the raw amino-acid sequence, 149 residues long: uncharacterized protein (149 aa).

This is an uncharacterized protein from Escherichia coli (strain K12).